A 187-amino-acid chain; its full sequence is Orotate phosphoribosyltransferase (187 aa).

5-phospho-alpha-D-ribose 1-diphosphate-binding positions include arginine 103, lysine 104, lysine 107, and glutamate 129–serine 137. Residues threonine 133 and arginine 161 each contribute to the orotate site.

Belongs to the purine/pyrimidine phosphoribosyltransferase family. PyrE subfamily. As to quaternary structure, homodimer. Requires Mg(2+) as cofactor.

The enzyme catalyses orotidine 5'-phosphate + diphosphate = orotate + 5-phospho-alpha-D-ribose 1-diphosphate. It functions in the pathway pyrimidine metabolism; UMP biosynthesis via de novo pathway; UMP from orotate: step 1/2. Functionally, catalyzes the transfer of a ribosyl phosphate group from 5-phosphoribose 1-diphosphate to orotate, leading to the formation of orotidine monophosphate (OMP). This is Orotate phosphoribosyltransferase from Methanosarcina acetivorans (strain ATCC 35395 / DSM 2834 / JCM 12185 / C2A).